A 242-amino-acid polypeptide reads, in one-letter code: Glucosamine-6-phosphate deaminase (242 aa).

Catalysis depends on aspartate 67, which acts as the Proton acceptor; for enolization step. Asparagine 136 acts as the For ring-opening step in catalysis. Residue histidine 138 is the Proton acceptor; for ring-opening step of the active site. The active-site For ring-opening step is the glutamate 143.

It belongs to the glucosamine/galactosamine-6-phosphate isomerase family. NagB subfamily.

It carries out the reaction alpha-D-glucosamine 6-phosphate + H2O = beta-D-fructose 6-phosphate + NH4(+). It functions in the pathway amino-sugar metabolism; N-acetylneuraminate degradation; D-fructose 6-phosphate from N-acetylneuraminate: step 5/5. Functionally, catalyzes the reversible isomerization-deamination of glucosamine 6-phosphate (GlcN6P) to form fructose 6-phosphate (Fru6P) and ammonium ion. This chain is Glucosamine-6-phosphate deaminase, found in Alkaliphilus metalliredigens (strain QYMF).